The sequence spans 279 residues: Fatty acid metabolism regulator protein (279 aa).

Positions 6 to 74 constitute an HTH gntR-type domain; that stretch reads KSPAGFAEKY…HGKPTKVNQF (69 aa). Positions 34-53 form a DNA-binding region, H-T-H motif; sequence ERELSELIGVTRTTLREVLQ.

As to quaternary structure, homodimer.

The protein localises to the cytoplasm. Its function is as follows. Multifunctional regulator of fatty acid metabolism. The sequence is that of Fatty acid metabolism regulator protein from Vibrio parahaemolyticus serotype O3:K6 (strain RIMD 2210633).